The sequence spans 445 residues: Tubulin beta chain (445 aa).

8 residues coordinate GTP: glutamine 11, glutamate 69, serine 138, glycine 142, threonine 143, glycine 144, asparagine 204, and asparagine 226. Residue glutamate 69 participates in Mg(2+) binding. Residues 426–445 form a disordered region; it reads QDATAEEEGEFEEEEGDVEA. Residues 429–445 show a composition bias toward acidic residues; the sequence is TAEEEGEFEEEEGDVEA.

It belongs to the tubulin family. As to quaternary structure, dimer of alpha and beta chains. A typical microtubule is a hollow water-filled tube with an outer diameter of 25 nm and an inner diameter of 15 nM. Alpha-beta heterodimers associate head-to-tail to form protofilaments running lengthwise along the microtubule wall with the beta-tubulin subunit facing the microtubule plus end conferring a structural polarity. Microtubules usually have 13 protofilaments but different protofilament numbers can be found in some organisms and specialized cells. Interacts with DCX/apicortin; the interaction stabilizes microtubule assembly. It depends on Mg(2+) as a cofactor.

The protein resides in the cytoplasm. Its subcellular location is the cytoskeleton. Its function is as follows. Tubulin is the major constituent of microtubules, a cylinder consisting of laterally associated linear protofilaments composed of alpha- and beta-tubulin heterodimers. Microtubules grow by the addition of GTP-tubulin dimers to the microtubule end, where a stabilizing cap forms. Below the cap, tubulin dimers are in GDP-bound state, owing to GTPase activity of alpha-tubulin. In Plasmodium falciparum (isolate 3D7), this protein is Tubulin beta chain.